The sequence spans 61 residues: Small ribosomal subunit protein uS14 (61 aa).

Zn(2+) is bound by residues C24, C27, C40, and C43.

It belongs to the universal ribosomal protein uS14 family. Zinc-binding uS14 subfamily. Part of the 30S ribosomal subunit. Contacts proteins S3 and S10. Requires Zn(2+) as cofactor.

Binds 16S rRNA, required for the assembly of 30S particles and may also be responsible for determining the conformation of the 16S rRNA at the A site. This Geotalea daltonii (strain DSM 22248 / JCM 15807 / FRC-32) (Geobacter daltonii) protein is Small ribosomal subunit protein uS14.